A 396-amino-acid polypeptide reads, in one-letter code: KiSS-1 receptor (396 aa).

Over 1 to 46 (MAAEATLGPNVSWWAPSNASGCPGCGVNASDGPGSAPRPLDAWLVP) the chain is Extracellular. 3 N-linked (GlcNAc...) asparagine glycosylation sites follow: Asn10, Asn18, and Asn28. The chain crosses the membrane as a helical span at residues 47–67 (LFFAALMLLGLVGNSLVIFVI). Topologically, residues 68 to 90 (CRHKHMQTVTNFYIANLAATDVT) are cytoplasmic. Residues 91–111 (FLLCCVPFTALLYPLPTWVLG) traverse the membrane as a helical segment. At 112–120 (DFMCKFVNY) the chain is on the extracellular side. The cysteines at positions 115 and 191 are disulfide-linked. A helical membrane pass occupies residues 121–138 (IQQVSVQATCATLTAMSV). The Cytoplasmic segment spans residues 139–159 (DRWYVTVFPLRALHRRTPRLA). A helical membrane pass occupies residues 160-180 (LTVSLSIWVGSAAVSAPVLAL). Topologically, residues 181–202 (HRLSPGPHTYCSEAFPSRALER) are extracellular. The helical transmembrane segment at 203–223 (AFALYNLLALYLLPLLATCAC) threads the bilayer. Residues 224-264 (YGAMLRHLGRAAVRPAPTDGALQGQLLAQRAGAVRTKVSRL) are Cytoplasmic-facing. A helical transmembrane segment spans residues 265–285 (VAAVVLLFAACWGPIQLFLVL). Over 286–305 (QALGPSGAWHPRSYAAYALK) the chain is Extracellular. Residues 306 to 326 (IWAHCMSYSNSALNPLLYAFL) traverse the membrane as a helical segment. The Cytoplasmic segment spans residues 327 to 396 (GSHFRQAFCR…SVQDEHTAPL (70 aa)). The tract at residues 346–396 (RRPHASAHSDRAAPHSVPHSRAAHPVRVRTPEPGNPVRRSPSVQDEHTAPL) is disordered.

Belongs to the G-protein coupled receptor 1 family. Highest expression levels in the cerebrum and cecum. Moderate expression in the ovary, colon and placenta. Low levels in the uterus, small intestine, and thymus. Expressed only moderately in the placenta. No expression in kidney tissues. Has a complex and abundant central nervous system expression pattern. Expressed in brain regions such as pons, midbrain, thalamus, hypothalamus, hippocampus, amygdala, cortex, frontal cortex, and striatum. No expression in the cerebellum. Persistent expression is detected in hypothalamus throughout postnatal development, with maximum expression levels at puberty in both male and female. Hypothalamic expression changed throughout the estrus cycle and is significantly increased after gonadectomy, a rise that is prevented by sex steroid replacement both in males and females.

Its subcellular location is the cell membrane. Its function is as follows. Receptor for metastin, a C-terminally amidated peptide of KiSS1. KiSS1 is a metastasis suppressor protein. Activation of the receptor inhibits cell proliferation and cell migration, key characteristics of tumor metastasis. The receptor is essential for normal gonadotropin-released hormone physiology and for puberty. The hypothalamic KiSS1/KISS1R system is a pivotal factor in central regulation of the gonadotropic axis at puberty and in adulthood. Analysis of the transduction pathways activated by the receptor identifies coupling to phospholipase C and intracellular calcium release through pertussis toxin-insensitive G(q) proteins. This Rattus norvegicus (Rat) protein is KiSS-1 receptor (Kiss1r).